A 103-amino-acid polypeptide reads, in one-letter code: Large ribosomal subunit protein uL23 (103 aa).

Belongs to the universal ribosomal protein uL23 family. In terms of assembly, part of the 50S ribosomal subunit. Contacts protein L29, and trigger factor when it is bound to the ribosome.

In terms of biological role, one of the early assembly proteins it binds 23S rRNA. One of the proteins that surrounds the polypeptide exit tunnel on the outside of the ribosome. Forms the main docking site for trigger factor binding to the ribosome. The sequence is that of Large ribosomal subunit protein uL23 from Chlorobium phaeobacteroides (strain DSM 266 / SMG 266 / 2430).